Reading from the N-terminus, the 573-residue chain is ESX-1 secretion system protein EccA1 (573 aa).

An ATP-binding site is contributed by 334 to 341 (GPPGTGKT).

It belongs to the CbxX/CfxQ family. As to quaternary structure, part of the ESX-1 / type VII secretion system (T7SS), which is composed of cytosolic and membrane components.

It is found in the cytoplasm. Functionally, part of the ESX-1 / type VII specialized secretion system (T7SS), which exports several proteins including EsxA and EsxB. EccA1 exhibits ATPase activity and may provide energy for the export of ESX-1 substrates. This is ESX-1 secretion system protein EccA1 from Mycobacterium leprae (strain TN).